Here is a 263-residue protein sequence, read N- to C-terminus: 3-methyl-2-oxobutanoate hydroxymethyltransferase (263 aa).

Aspartate 44 and aspartate 83 together coordinate Mg(2+). 3-methyl-2-oxobutanoate is bound by residues 44–45, aspartate 83, and lysine 113; that span reads DS. Glutamate 115 is a binding site for Mg(2+). The active-site Proton acceptor is the glutamate 183.

It belongs to the PanB family. Homodecamer; pentamer of dimers. The cofactor is Mg(2+).

It is found in the cytoplasm. It catalyses the reaction 3-methyl-2-oxobutanoate + (6R)-5,10-methylene-5,6,7,8-tetrahydrofolate + H2O = 2-dehydropantoate + (6S)-5,6,7,8-tetrahydrofolate. Its pathway is cofactor biosynthesis; (R)-pantothenate biosynthesis; (R)-pantoate from 3-methyl-2-oxobutanoate: step 1/2. Its function is as follows. Catalyzes the reversible reaction in which hydroxymethyl group from 5,10-methylenetetrahydrofolate is transferred onto alpha-ketoisovalerate to form ketopantoate. The chain is 3-methyl-2-oxobutanoate hydroxymethyltransferase from Trichodesmium erythraeum (strain IMS101).